Reading from the N-terminus, the 932-residue chain is Potassium voltage-gated channel subfamily KQT member 5 (932 aa).

The Cytoplasmic segment spans residues 1–125 (MPRHHAGGEE…YNVLERPRGW (125 aa)). The residue at position 88 (Ser88) is a Phosphoserine. Residues 126–146 (AFIYHAFVFLLVFGCLILSVF) traverse the membrane as a helical segment. Residues 147-156 (STIPEHTKLA) are Extracellular-facing. The helical transmembrane segment at 157–177 (SSCLLILEFVMIVVFGLEFII) threads the bilayer. The Cytoplasmic portion of the chain corresponds to 178-200 (RIWSAGCCCRYRGWQGRLRFARK). A helical membrane pass occupies residues 201-221 (PFCVIDTIVLIASIAVVSAKT). The Extracellular portion of the chain corresponds to 222-229 (QGNIFATS). A helical; Voltage-sensor membrane pass occupies residues 230–252 (ALRSLRFLQILRMVRMDRRGGTW). Residues Arg248 and Lys264 each contribute to the a 1,2-diacyl-sn-glycero-3-phospho-(1D-myo-inositol-4,5-bisphosphate) site. The Cytoplasmic portion of the chain corresponds to 253-266 (KLLGSVVYAHSKEL). The chain crosses the membrane as a helical span at residues 267–287 (ITAWYIGFLVLIFSSFLVYLV). Residues 288 to 298 (EKDANKEFSTY) lie on the Extracellular side of the membrane. An intramembrane region (pore-forming) is located at residues 299–319 (ADALWWGTITLTTIGYGDKTP). Over 320 to 325 (LTWLGR) the chain is Extracellular. Residues 326-346 (LLSAGFALLGISFFALPAGIL) form a helical membrane-spanning segment. At 347 to 932 (GSGFALKVQE…ALSLPHVKLK (586 aa)) the chain is on the cytoplasmic side. Position 361 (Lys361) interacts with a 1,2-diacyl-sn-glycero-3-phospho-(1D-myo-inositol-4,5-bisphosphate). The segment at 370–378 (AANLIQCVW) is interaction with CALM. A disordered region spans residues 404–465 (SPTKKEQGEA…GSPTKVQKSW (62 aa)). A compositionally biased stretch (polar residues) spans 431 to 440 (RGQSIKSRQA). Ser447 bears the Phosphoserine mark. The interaction with CALM stretch occupies residues 521-528 (VIRAIRIM). A disordered region spans residues 655–678 (SDYQSPVDSKDLSGSAQNSGCLSR). A Phosphoserine modification is found at Ser831. Residues 876–885 (VGPEETETDT) are compositionally biased toward acidic residues. Positions 876–919 (VGPEETETDTFDAAPQPAREAAFASDSLRTGRSRSSQSICKAGE) are disordered. A compositionally biased stretch (low complexity) spans 888-899 (AAPQPAREAAFA). Polar residues predominate over residues 902 to 914 (SLRTGRSRSSQSI).

Belongs to the potassium channel family. KQT (TC 1.A.1.15) subfamily. Kv7.5/KCNQ5 sub-subfamily. In terms of assembly, homotetramer; forms a functional homotetrameric channel resulting in the expression of a small M-current. Heterotetramer with KCNQ3; forms heterotetrameric M-channel responsible for the native M-current. Heterotetramer with KCNQ1; forms a functional voltage-gated potassium channel. Interacts (via C-terminus) with calmodulin/CALM1; forms a heterooctameric structure (with 4:4 KCNQ1:CALM stoichiometry); the interaction is calcium-independent, constitutive and participates in the channel function. Strongly expressed in brain and skeletal muscle. In brain, expressed in cerebral cortex, occipital pole, frontal lobe and temporal lobe. Lower levels in hippocampus and putamen. Low to undetectable levels in medulla, cerebellum and thalamus.

The protein resides in the cell membrane. It carries out the reaction K(+)(in) = K(+)(out). Its activity is regulated as follows. Phosphatidylinositol-4,5-bisphosphate (PIP2) is essential to activate KCNQ5 channel by inducing the coupling of the voltage-sensing domain (VSD) and the pore-forming domain (PD). Calcium suppresses KCNQ5 channel current through calcium-bound CALM C-terminus. Therefore CALM acts as calcium sensor that controls channel activity. Activated by niflumic acid and the anticonvulsant retigabine. Inhibited by barium, linopirdine, XE991 and tetraethylammonium (as homomer). Insensitive to tetraethylammonium in KCNQ3-KCNQ5 heteromers. In terms of biological role, pore-forming subunit of the voltage-gated potassium (Kv) channel broadly expressed in brain and involved in the regulation of neuronal excitability. Associates with KCNQ3/Kv7.3 pore-forming subunit to form a potassium channel which contributes to M-type current, a slowly activating and deactivating potassium conductance which plays a critical role in determining the subthreshold electrical excitability of neurons. Contributes, with other potassium channels, to the molecular diversity of a heterogeneous population of M-channels, varying in kinetic and pharmacological properties, which underlie this physiologically important current. Also forms a functional channel with KCNQ1/Kv7.1 subunit that may contribute to vasoconstriction and hypertension. Channel may be selectively permeable in vitro to other cations besides potassium, in decreasing order of affinity K(+) = Rb(+) &gt; Cs(+) &gt; Na(+). Similar to the native M-channel, KCNQ3-KCNQ5 potassium channel is suppressed by activation of the muscarinic acetylcholine receptor CHRM1. The protein is Potassium voltage-gated channel subfamily KQT member 5 of Homo sapiens (Human).